A 377-amino-acid chain; its full sequence is Chaperone protein DnaJ (377 aa).

In terms of domain architecture, J spans 5-70 (DYYEILGVSK…EKRSAYDQYG (66 aa)). A CR-type zinc finger spans residues 131 to 209 (GVVREICVPT…CRGSGRIERT (79 aa)). Zn(2+) is bound by residues C144, C147, C161, C164, C183, C186, C197, and C200. CXXCXGXG motif repeat units follow at residues 144–151 (CLQCRGSG), 161–168 (CVTCHGHG), 183–190 (CPSCNGHG), and 197–204 (CNKCRGSG).

Belongs to the DnaJ family. As to quaternary structure, homodimer. Requires Zn(2+) as cofactor.

Its subcellular location is the cytoplasm. In terms of biological role, participates actively in the response to hyperosmotic and heat shock by preventing the aggregation of stress-denatured proteins and by disaggregating proteins, also in an autonomous, DnaK-independent fashion. Unfolded proteins bind initially to DnaJ; upon interaction with the DnaJ-bound protein, DnaK hydrolyzes its bound ATP, resulting in the formation of a stable complex. GrpE releases ADP from DnaK; ATP binding to DnaK triggers the release of the substrate protein, thus completing the reaction cycle. Several rounds of ATP-dependent interactions between DnaJ, DnaK and GrpE are required for fully efficient folding. Also involved, together with DnaK and GrpE, in the DNA replication of plasmids through activation of initiation proteins. The chain is Chaperone protein DnaJ from Blochmanniella floridana.